The sequence spans 348 residues: Cuticle collagen rol-6 (348 aa).

Residues 76 to 348 (GYGATGVQPP…SARRHRKFQL (273 aa)) form a disordered region. The span at 120 to 137 (PGGGFPDGPFPNGGGPRG) shows a compositional bias: gly residues. Triple-helical region regions lie at residues 152–178 (GPAGPEGEEGPDGHDGQDGVPGFDGKD), 196–258 (GPLG…DGER), 261–284 (GRPGPRGPPGEAGPEGPQGPTGRD), and 288–323 (GQSGPQGEPGLQGYGGAAGEDGPEGPPGAPGLPGKD). Positions 194–231 (PQGPLGPQGPNGAPGLRGMRGARGQPGRPGRDGNPGMP) are enriched in low complexity. The segment covering 297–306 (GLQGYGGAAG) has biased composition (gly residues). A compositionally biased stretch (basic and acidic residues) spans 322 to 338 (KDAEYCKCPGREGDAGR). The segment covering 339–348 (SARRHRKFQL) has biased composition (basic residues).

Belongs to the cuticular collagen family. As to quaternary structure, collagen polypeptide chains are complexed within the cuticle by disulfide bonds and other types of covalent cross-links. In terms of tissue distribution, localizes in stripes along the alae.

Its function is as follows. Nematode cuticles are composed largely of collagen-like proteins. The cuticle functions both as an exoskeleton and as a barrier to protect the worm from its environment. May play a role in cuticle remodeling in response to the environment. Involved in body morphogenesis. This chain is Cuticle collagen rol-6 (rol-6), found in Caenorhabditis elegans.